Consider the following 505-residue polypeptide: tRNA-2-methylthio-N(6)-dimethylallyladenosine synthase (505 aa).

The disordered stretch occupies residues 1-39 (MGQKAKAQAPTTHPRPHTLSSQVAPALPRRPRHAAPESL). The 116-residue stretch at 47–162 (MKAHLITYGC…IGAALESNER (116 aa)) folds into the MTTase N-terminal domain. The [4Fe-4S] cluster site is built by cysteine 56, cysteine 92, cysteine 125, cysteine 194, cysteine 198, and cysteine 201. One can recognise a Radical SAM core domain in the interval 180 to 413 (PSGKLQAHLT…IARQKDWSAR (234 aa)). One can recognise a TRAM domain in the interval 416–479 (AQKVGTVQQV…PHMMYGHILG (64 aa)).

Belongs to the methylthiotransferase family. MiaB subfamily. In terms of assembly, monomer. [4Fe-4S] cluster serves as cofactor.

The protein resides in the cytoplasm. It carries out the reaction N(6)-dimethylallyladenosine(37) in tRNA + (sulfur carrier)-SH + AH2 + 2 S-adenosyl-L-methionine = 2-methylsulfanyl-N(6)-dimethylallyladenosine(37) in tRNA + (sulfur carrier)-H + 5'-deoxyadenosine + L-methionine + A + S-adenosyl-L-homocysteine + 2 H(+). Its function is as follows. Catalyzes the methylthiolation of N6-(dimethylallyl)adenosine (i(6)A), leading to the formation of 2-methylthio-N6-(dimethylallyl)adenosine (ms(2)i(6)A) at position 37 in tRNAs that read codons beginning with uridine. This is tRNA-2-methylthio-N(6)-dimethylallyladenosine synthase from Deinococcus radiodurans (strain ATCC 13939 / DSM 20539 / JCM 16871 / CCUG 27074 / LMG 4051 / NBRC 15346 / NCIMB 9279 / VKM B-1422 / R1).